The primary structure comprises 61 residues: Large ribosomal subunit protein eL37 (61 aa).

Zn(2+)-binding residues include C19, C22, C34, and C37. The C4-type zinc finger occupies 19–37 (CRRCGRNAYNVSKHYCAAC).

Belongs to the eukaryotic ribosomal protein eL37 family. Zn(2+) is required as a cofactor.

Functionally, binds to the 23S rRNA. In Saccharolobus islandicus (strain Y.N.15.51 / Yellowstone #2) (Sulfolobus islandicus), this protein is Large ribosomal subunit protein eL37.